Reading from the N-terminus, the 100-residue chain is Small ribosomal subunit protein bS18c (100 aa).

It belongs to the bacterial ribosomal protein bS18 family. As to quaternary structure, part of the 30S ribosomal subunit.

Its subcellular location is the plastid. The protein resides in the chloroplast. In Pleurastrum terricola (Filamentous green alga), this protein is Small ribosomal subunit protein bS18c.